We begin with the raw amino-acid sequence, 177 residues long: Large ribosomal subunit protein uL6 (177 aa).

It belongs to the universal ribosomal protein uL6 family. Part of the 50S ribosomal subunit.

In terms of biological role, this protein binds to the 23S rRNA, and is important in its secondary structure. It is located near the subunit interface in the base of the L7/L12 stalk, and near the tRNA binding site of the peptidyltransferase center. The polypeptide is Large ribosomal subunit protein uL6 (Vibrio parahaemolyticus serotype O3:K6 (strain RIMD 2210633)).